A 215-amino-acid polypeptide reads, in one-letter code: N-(5'-phosphoribosyl)anthranilate isomerase (215 aa).

It belongs to the TrpF family.

It carries out the reaction N-(5-phospho-beta-D-ribosyl)anthranilate = 1-(2-carboxyphenylamino)-1-deoxy-D-ribulose 5-phosphate. It functions in the pathway amino-acid biosynthesis; L-tryptophan biosynthesis; L-tryptophan from chorismate: step 3/5. The chain is N-(5'-phosphoribosyl)anthranilate isomerase from Cellvibrio japonicus (strain Ueda107) (Pseudomonas fluorescens subsp. cellulosa).